The following is a 241-amino-acid chain: Cobalt transport protein CbiM (241 aa).

The signal sequence occupies residues 1 to 23; it reads MKKNLTFFMVIALLFTITPNVYA. The next 6 helical transmembrane spans lie at 29 to 49, 66 to 86, 98 to 118, 121 to 141, 160 to 180, and 202 to 222; these read GFLP…FIII, MLLG…IPSV, LSAI…VLIF, ILLA…MGIM, VAVF…TSVQ, and IFSI…VIIF.

It belongs to the CbiM family. As to quaternary structure, forms an energy-coupling factor (ECF) transporter complex composed of an ATP-binding protein (A component, CbiO), a transmembrane protein (T component, CbiQ) and 2 possible substrate-capture proteins (S components, CbiM and CbiN) of unknown stoichimetry.

It localises to the cell membrane. It participates in cofactor biosynthesis; adenosylcobalamin biosynthesis. In terms of biological role, part of the energy-coupling factor (ECF) transporter complex CbiMNOQ involved in cobalt import. The protein is Cobalt transport protein CbiM of Clostridium tetani (strain Massachusetts / E88).